A 122-amino-acid polypeptide reads, in one-letter code: Large ribosomal subunit protein bL12 (122 aa).

The protein belongs to the bacterial ribosomal protein bL12 family. In terms of assembly, homodimer. Part of the ribosomal stalk of the 50S ribosomal subunit. Forms a multimeric L10(L12)X complex, where L10 forms an elongated spine to which 2 to 4 L12 dimers bind in a sequential fashion. Binds GTP-bound translation factors.

Forms part of the ribosomal stalk which helps the ribosome interact with GTP-bound translation factors. Is thus essential for accurate translation. In Cellvibrio japonicus (strain Ueda107) (Pseudomonas fluorescens subsp. cellulosa), this protein is Large ribosomal subunit protein bL12.